The following is a 278-amino-acid chain: Cysteine-rich repeat secretory protein 18 (278 aa).

The signal sequence occupies residues 1-32 (MYSSSSVSKRFVLVPIVVVVTTQLLLVRNVSS). 2 Gnk2-homologous domains span residues 39–147 (YLHH…SLDT) and 160–267 (PSAK…LYPF).

It belongs to the cysteine-rich repeat secretory protein family.

It is found in the secreted. The polypeptide is Cysteine-rich repeat secretory protein 18 (CRRSP18) (Arabidopsis thaliana (Mouse-ear cress)).